A 213-amino-acid chain; its full sequence is Motile sperm domain-containing protein 1 (213 aa).

The MSP domain maps to Pro16–Phe143. The next 2 membrane-spanning stretches (helical) occupy residues Ser159–Gly179 and Leu191–Leu211. A Nuclear export signal motif is present at residues Leu205–Met208.

It is found in the endoplasmic reticulum membrane. Its subcellular location is the golgi apparatus membrane. Plays a role in differentiation and/or proliferation of mesenchymal stem cells. Proposed to be involved in epithelial-to-mesenchymal transition (EMT). However, another study suggests that it is not required for EMT or stem cell self-renewal and acts during later stages of differentiation. This Pongo abelii (Sumatran orangutan) protein is Motile sperm domain-containing protein 1 (MOSPD1).